The primary structure comprises 338 residues: Replication factor C small subunit (338 aa).

53–60 (GPPGVGKT) serves as a coordination point for ATP.

Belongs to the activator 1 small subunits family. RfcS subfamily. As to quaternary structure, heteromultimer composed of small subunits (RfcS) and large subunits (RfcL).

Part of the RFC clamp loader complex which loads the PCNA sliding clamp onto DNA. The protein is Replication factor C small subunit of Methanosarcina mazei (strain ATCC BAA-159 / DSM 3647 / Goe1 / Go1 / JCM 11833 / OCM 88) (Methanosarcina frisia).